Here is a 281-residue protein sequence, read N- to C-terminus: Putative phosphoenolpyruvate synthase regulatory protein (281 aa).

Residue 161-168 (GVSRSGKT) participates in ADP binding.

It belongs to the pyruvate, phosphate/water dikinase regulatory protein family. PSRP subfamily.

The enzyme catalyses [pyruvate, water dikinase] + ADP = [pyruvate, water dikinase]-phosphate + AMP + H(+). It catalyses the reaction [pyruvate, water dikinase]-phosphate + phosphate + H(+) = [pyruvate, water dikinase] + diphosphate. In terms of biological role, bifunctional serine/threonine kinase and phosphorylase involved in the regulation of the phosphoenolpyruvate synthase (PEPS) by catalyzing its phosphorylation/dephosphorylation. The sequence is that of Putative phosphoenolpyruvate synthase regulatory protein from Herminiimonas arsenicoxydans.